The chain runs to 1537 residues: Dual oxidase (1537 aa).

A disordered region spans residues 1 to 29; that stretch reads MSVPSAPHQRAESKNRVPRPGQKNRKLPK. The Extracellular segment spans residues 1 to 626; sequence MSVPSAPHQR…EGYDYFSGSE (626 aa). Residues 63–628 are peroxidase-like; mediates peroxidase activity; that stretch reads MYSQTEKQRY…YDYFSGSELM (566 aa). N-linked (GlcNAc...) asparagine glycans are attached at residues Asn-133, Asn-233, Asn-577, and Asn-606. A helical transmembrane segment spans residues 627–647; the sequence is LMFIYVCVFLGFVPILCAGAG. The Cytoplasmic portion of the chain corresponds to 648–1029; that stretch reads YCVVKLQNSK…ITFLEENRQN (382 aa). Ser-826 carries the post-translational modification Phosphoserine. EF-hand domains follow at residues 855–890, 891–926, and 936–971; these read PNDM…FSRG, KTDD…LVEI, and QVTE…YKGD. Ca(2+) contacts are provided by Asp-868, Asp-870, Asp-872, Arg-874, Glu-879, Asp-904, Asp-906, Asn-908, and Glu-915. Residues 1030–1050 form a helical membrane-spanning segment; the sequence is IFYLFLFYVVTIVLFVERFIH. At 1051-1065 the chain is on the extracellular side; it reads YSFMAEHTDLRHIMG. A helical transmembrane segment spans residues 1066 to 1086; that stretch reads VGIAITRGSAASLSFCYSLLL. A Ferric oxidoreductase domain is found at 1078–1218; that stretch reads LSFCYSLLLL…TLYIGLYLLS (141 aa). The Cytoplasmic segment spans residues 1087-1116; the sequence is LTMSRNLITKLKEFPIQQYIPLDSHIQFHK. A Phosphotyrosine modification is found at Tyr-1105. A helical transmembrane segment spans residues 1117 to 1137; that stretch reads IAACTALFFSVLHTVGHIVNF. The Extracellular segment spans residues 1138-1171; it reads YHVSTQSHENLRCLTREVHFASDYKPDITFWLFQ. The helical transmembrane segment at 1172–1192 threads the bilayer; the sequence is TVTGTTGVMLFIIMCIIFVFA. The Cytoplasmic portion of the chain corresponds to 1193–1202; that stretch reads HPTIRKKAYN. Residues 1203–1223 form a helical membrane-spanning segment; it reads FFWNMHTLYIGLYLLSLIHGL. The Extracellular segment spans residues 1224–1230; the sequence is ARLTGPP. A helical transmembrane segment spans residues 1231–1251; that stretch reads RFWMFFLGPGIVYTLDKIVSL. The Cytoplasmic segment spans residues 1252–1537; the sequence is RTKYMALDVI…YFIHHFENFG (286 aa). One can recognise an FAD-binding FR-type domain in the interval 1253-1358; the sequence is TKYMALDVID…EGPFGGGNQD (106 aa).

The protein in the N-terminal section; belongs to the peroxidase family.

The protein resides in the membrane. It carries out the reaction NADH + O2 + H(+) = H2O2 + NAD(+). The catalysed reaction is NADPH + O2 + H(+) = H2O2 + NADP(+). Peroxidase activity is inhibited by aminotriazole and azide. In terms of biological role, plays a role in innate immunity limiting microbial proliferation in the gut. Acts downstream of a hh-signaling pathway to induce the production of reactive oxygen species (ROS) in response to intestinal bacterial infection. May generate antimicrobial oxidative burst through its peroxidase-like domain. The sequence is that of Dual oxidase (Duox) from Drosophila melanogaster (Fruit fly).